Here is a 1398-residue protein sequence, read N- to C-terminus: Protein timeless (1398 aa).

Residues 237–268 (VSTLQKLLSLWFEASLSESSEDNESNTSPPKQ) form a necessary for normal circadian rhythm region. 5 disordered regions span residues 254–300 (ESSE…GGMR), 322–452 (ARVP…QKFN), 478–555 (TKGK…LRRK), 1127–1147 (TASS…SSVS), and 1220–1239 (NHRT…SSTT). A compositionally biased stretch (low complexity) spans 273–290 (SSPMLTSDPTSDSSDNGS). Residues 291-300 (NGRGMGGGMR) are compositionally biased toward gly residues. The segment covering 338 to 355 (MTGNDSEQPGSPEQSQPA) has biased composition (polar residues). Residues 365 to 375 (EDQRHRQLNEH) show a composition bias toward basic and acidic residues. A compositionally biased stretch (acidic residues) spans 376–390 (GEEDEDEDEVEEEEY). Polar residues-rich tracts occupy residues 400–421 (LNLT…SSAP), 440–452 (ASTS…QKFN), and 504–515 (QVENQESISTSS). A compositionally biased stretch (low complexity) spans 522-531 (QGKPQHQKPP). A Nuclear localization signal motif is present at residues 550–560 (KELRRKKLVKR).

It belongs to the timeless family. In terms of assembly, forms a heterodimer with period (PER); the complex then translocates into the nucleus. In terms of processing, phosphorylated with a circadian rhythmicity. In terms of tissue distribution, expressed in head, photoreceptors, lateral neurons and glial cells in the lamina and medulla of the optic lobes. Expression follows a light-dark cycle, levels show a significant decrease at the end of the night and then remain low throughout the light period (at protein level).

The protein localises to the nucleus. The protein resides in the cytoplasm. It localises to the perinuclear region. Its function is as follows. Required for the production of circadian rhythms. The biological cycle depends on the rhythmic formation and nuclear localization of the TIM-PER complex. Light induces the degradation of TIM, which promotes elimination of PER. Nuclear activity of the heterodimer coordinatively regulates PER and TIM transcription through a negative feedback loop. Behaves as a negative element in circadian transcriptional loop. Does not appear to bind DNA, suggesting indirect transcriptional inhibition. The sequence is that of Protein timeless (tim) from Drosophila melanogaster (Fruit fly).